The following is a 355-amino-acid chain: uncharacterized protein (355 aa).

Residues 1–27 (MESPIRTARRTLPLLIGATCLVLALTG) form the signal peptide. Cys28 carries N-palmitoyl cysteine lipidation. Cys28 carries the S-diacylglycerol cysteine lipid modification. Residues 33–53 (GPAQARPTPSASTSPKQAPAL) are disordered. Positions 39–48 (PTPSASTSPK) are enriched in polar residues.

Its subcellular location is the cell membrane. This is an uncharacterized protein from Streptomyces coelicolor (strain ATCC BAA-471 / A3(2) / M145).